Reading from the N-terminus, the 727-residue chain is Protein edg-1 (727 aa).

A disordered region spans residues 703–727 (FAESSVKPTTSSAYGNSSNFSRYAD).

May interact with deps-1 and prg-1.

Its subcellular location is the cytoplasmic granule. In terms of biological role, plays a role in regulating deps-1 cluster formation in the germline. The polypeptide is Protein edg-1 (Caenorhabditis elegans).